The primary structure comprises 567 residues: Proline--tRNA ligase (567 aa).

Belongs to the class-II aminoacyl-tRNA synthetase family. ProS type 1 subfamily. Homodimer.

It is found in the cytoplasm. It catalyses the reaction tRNA(Pro) + L-proline + ATP = L-prolyl-tRNA(Pro) + AMP + diphosphate. Catalyzes the attachment of proline to tRNA(Pro) in a two-step reaction: proline is first activated by ATP to form Pro-AMP and then transferred to the acceptor end of tRNA(Pro). As ProRS can inadvertently accommodate and process non-cognate amino acids such as alanine and cysteine, to avoid such errors it has two additional distinct editing activities against alanine. One activity is designated as 'pretransfer' editing and involves the tRNA(Pro)-independent hydrolysis of activated Ala-AMP. The other activity is designated 'posttransfer' editing and involves deacylation of mischarged Ala-tRNA(Pro). The misacylated Cys-tRNA(Pro) is not edited by ProRS. The polypeptide is Proline--tRNA ligase (Staphylococcus aureus (strain bovine RF122 / ET3-1)).